Here is a 973-residue protein sequence, read N- to C-terminus: Probable outer membrane protein pmp13 (973 aa).

Positions 1–24 are cleaved as a signal peptide; the sequence is MKTSIRKFLISTTLAPCFASTAFT. Polar residues predominate over residues 284–293; the sequence is QNNTASPQNS. Residues 284 to 303 form a disordered region; it reads QNNTASPQNSLPAPTPPPTP. The 283-residue stretch at 691 to 973 folds into the Autotransporter domain; that stretch reads EDVPGKQLSI…TLDIGSKLRF (283 aa).

The protein belongs to the PMP outer membrane protein family.

It localises to the secreted. The protein localises to the cell wall. It is found in the cell outer membrane. In Chlamydia pneumoniae (Chlamydophila pneumoniae), this protein is Probable outer membrane protein pmp13 (pmp13).